The sequence spans 43 residues: Disintegrin CV (43 aa).

4 disulfide bridges follow: C1–C10, C6–C29, C7–C34, and C19–C36. The region spanning 1–43 is the Disintegrin domain; it reads CTTGPCCRQCKLKPAGTTCWRTSVSSHYCTGRSCECPSYPGNG. The Cell attachment site; atypical (RTS) motif lies at 21–23; that stretch reads RTS.

Belongs to the disintegrin family. Short disintegrin subfamily. As to quaternary structure, monomer. As to expression, expressed by the venom gland.

The protein resides in the secreted. In terms of biological role, specifically interacts with the alpha-1/beta-1 integrin (ITGA1/ITGB1). Exhibits highly inhibitory effects on cell adhesion and cell migration to collagens I and IV. Also shows in vivo anti-angiogenic activity. This chain is Disintegrin CV, found in Cerastes vipera (Sahara sand viper).